The sequence spans 429 residues: 3-phosphoshikimate 1-carboxyvinyltransferase (429 aa).

Residues Lys11, Ser12, and Arg16 each contribute to the 3-phosphoshikimate site. Lys11 is a phosphoenolpyruvate binding site. 2 residues coordinate phosphoenolpyruvate: Gly82 and Arg110. 3-phosphoshikimate is bound by residues Ser155, Gln157, Asp302, and Lys329. Gln157 is a phosphoenolpyruvate binding site. Asp302 serves as the catalytic Proton acceptor. Phosphoenolpyruvate contacts are provided by Arg333 and Arg385.

Belongs to the EPSP synthase family. Monomer.

It localises to the cytoplasm. The catalysed reaction is 3-phosphoshikimate + phosphoenolpyruvate = 5-O-(1-carboxyvinyl)-3-phosphoshikimate + phosphate. The protein operates within metabolic intermediate biosynthesis; chorismate biosynthesis; chorismate from D-erythrose 4-phosphate and phosphoenolpyruvate: step 6/7. Functionally, catalyzes the transfer of the enolpyruvyl moiety of phosphoenolpyruvate (PEP) to the 5-hydroxyl of shikimate-3-phosphate (S3P) to produce enolpyruvyl shikimate-3-phosphate and inorganic phosphate. The protein is 3-phosphoshikimate 1-carboxyvinyltransferase of Helicobacter pylori (strain Shi470).